Reading from the N-terminus, the 254-residue chain is PSME3-interacting protein (254 aa).

M1 carries the N-acetylmethionine modification. S17 bears the Phosphoserine mark. Residues 22–39 are compositionally biased toward basic and acidic residues; the sequence is DERRKRRQEEWEKVRKPE. The tract at residues 22-52 is disordered; sequence DERRKRRQEEWEKVRKPEDPEECPEEVYDPR. K139 carries the N6-acetyllysine modification. The tract at residues 155–195 is disordered; the sequence is GAVKHKSSESGNSVKRLKPDPEPDDKNQEPSSCKSLGNTSL. Residues 171–182 show a composition bias toward basic and acidic residues; sequence LKPDPEPDDKNQ. The span at 183-195 shows a compositional bias: polar residues; it reads EPSSCKSLGNTSL. The tract at residues 201–254 is interaction with PSME3; that stretch reads HCPSAAVCIGILPGLGAYSGSSDSESSSDSEGTINATGKIVSSIFRTNTFLEAP. 2 positions are modified to phosphoserine; by CK2: S222 and S228.

Interacts (via C-terminus) with both free and 20S proteasome-bound forms of the proteasome activator complex subunit PSME3; the interaction is direct. Post-translationally, phosphorylation by CK2 stabilizes the interaction with PSME3.

The protein resides in the nucleus. In terms of biological role, promotes the association of the proteasome activator complex subunit PSME3 with the 20S proteasome and regulates its activity. Inhibits PSME3-mediated degradation of some proteasome substrates, probably by affecting their diffusion rate into the catalytic chamber of the proteasome. Also inhibits the interaction of PSME3 with COIL, inhibits accumulation of PSME3 in Cajal bodies and positively regulates the number of Cajal bodies in the nucleus. This Homo sapiens (Human) protein is PSME3-interacting protein.